The chain runs to 112 residues: Nitrogen regulatory protein P-II (112 aa).

Position 51 is an O-UMP-tyrosine (Tyr51).

The protein belongs to the P(II) protein family. As to quaternary structure, homotrimer. Uridylylated/deuridylylated by GlnD.

P-II indirectly controls the transcription of the glutamine synthetase gene (GlnA). P-II prevents NR-II-catalyzed conversion of NR-I to NR-I-phosphate, the transcriptional activator of GlnA. When P-II is uridylylated to P-II-UMP, these events are reversed. When the ratio of Gln to 2-ketoglutarate decreases, P-II is uridylylated to P-II-UMP, which causes the deadenylation of glutamine synthetase by GlnE, so activating the enzyme. The protein is Nitrogen regulatory protein P-II (glnB) of Haemophilus influenzae (strain ATCC 51907 / DSM 11121 / KW20 / Rd).